We begin with the raw amino-acid sequence, 116 residues long: NADPH-dependent 7-cyano-7-deazaguanine reductase (116 aa).

Cysteine 31 serves as the catalytic Thioimide intermediate. The active-site Proton donor is aspartate 38. Substrate is bound by residues 53–55 (VEL) and 72–73 (YE).

Belongs to the GTP cyclohydrolase I family. QueF type 1 subfamily.

Its subcellular location is the cytoplasm. The enzyme catalyses 7-aminomethyl-7-carbaguanine + 2 NADP(+) = 7-cyano-7-deazaguanine + 2 NADPH + 3 H(+). The protein operates within tRNA modification; tRNA-queuosine biosynthesis. Functionally, catalyzes the NADPH-dependent reduction of 7-cyano-7-deazaguanine (preQ0) to 7-aminomethyl-7-deazaguanine (preQ1). The polypeptide is NADPH-dependent 7-cyano-7-deazaguanine reductase (Chlorobium phaeovibrioides (strain DSM 265 / 1930) (Prosthecochloris vibrioformis (strain DSM 265))).